A 364-amino-acid chain; its full sequence is Dual-specificity RNA methyltransferase RlmN (364 aa).

E91 serves as the catalytic Proton acceptor. In terms of domain architecture, Radical SAM core spans 102–337 (GTLRITQCLS…AIIRKSKGQD (236 aa)). C109 and C342 form a disulfide bridge. [4Fe-4S] cluster contacts are provided by C116, C120, and C123. Residues 169–170 (GE), S201, 223–225 (SLH), and N299 contribute to the S-adenosyl-L-methionine site. C342 serves as the catalytic S-methylcysteine intermediate.

This sequence belongs to the radical SAM superfamily. RlmN family. Requires [4Fe-4S] cluster as cofactor.

Its subcellular location is the cytoplasm. It carries out the reaction adenosine(2503) in 23S rRNA + 2 reduced [2Fe-2S]-[ferredoxin] + 2 S-adenosyl-L-methionine = 2-methyladenosine(2503) in 23S rRNA + 5'-deoxyadenosine + L-methionine + 2 oxidized [2Fe-2S]-[ferredoxin] + S-adenosyl-L-homocysteine. The enzyme catalyses adenosine(37) in tRNA + 2 reduced [2Fe-2S]-[ferredoxin] + 2 S-adenosyl-L-methionine = 2-methyladenosine(37) in tRNA + 5'-deoxyadenosine + L-methionine + 2 oxidized [2Fe-2S]-[ferredoxin] + S-adenosyl-L-homocysteine. Functionally, specifically methylates position 2 of adenine 2503 in 23S rRNA and position 2 of adenine 37 in tRNAs. m2A2503 modification seems to play a crucial role in the proofreading step occurring at the peptidyl transferase center and thus would serve to optimize ribosomal fidelity. This is Dual-specificity RNA methyltransferase RlmN from Nitratidesulfovibrio vulgaris (strain DP4) (Desulfovibrio vulgaris).